The primary structure comprises 210 residues: Peptidyl-tRNA hydrolase (210 aa).

Tyrosine 14 contacts tRNA. The Proton acceptor role is filled by histidine 19. TRNA contacts are provided by phenylalanine 64, asparagine 66, and asparagine 112.

Belongs to the PTH family. In terms of assembly, monomer.

The protein resides in the cytoplasm. The enzyme catalyses an N-acyl-L-alpha-aminoacyl-tRNA + H2O = an N-acyl-L-amino acid + a tRNA + H(+). Hydrolyzes ribosome-free peptidyl-tRNAs (with 1 or more amino acids incorporated), which drop off the ribosome during protein synthesis, or as a result of ribosome stalling. Functionally, catalyzes the release of premature peptidyl moieties from peptidyl-tRNA molecules trapped in stalled 50S ribosomal subunits, and thus maintains levels of free tRNAs and 50S ribosomes. In Methylorubrum extorquens (strain CM4 / NCIMB 13688) (Methylobacterium extorquens), this protein is Peptidyl-tRNA hydrolase.